The following is a 425-amino-acid chain: Adenylosuccinate synthetase (425 aa).

Residues 12-18 (GDEGKGK) and 40-42 (GHT) each bind GTP. Asp-13 acts as the Proton acceptor in catalysis. The Mg(2+) site is built by Asp-13 and Gly-40. Residues 13 to 16 (DEGK), 38 to 41 (NAGH), Thr-130, Arg-144, Gln-225, Thr-240, and Arg-304 each bind IMP. Catalysis depends on His-41, which acts as the Proton donor. Position 300–306 (300–306 (ATTGRPR)) interacts with substrate. Residues Arg-306, 332–334 (KLD), and 414–416 (SVG) each bind GTP.

It belongs to the adenylosuccinate synthetase family. In terms of assembly, homodimer. Requires Mg(2+) as cofactor.

The protein resides in the cytoplasm. It catalyses the reaction IMP + L-aspartate + GTP = N(6)-(1,2-dicarboxyethyl)-AMP + GDP + phosphate + 2 H(+). The protein operates within purine metabolism; AMP biosynthesis via de novo pathway; AMP from IMP: step 1/2. In terms of biological role, plays an important role in the de novo pathway of purine nucleotide biosynthesis. Catalyzes the first committed step in the biosynthesis of AMP from IMP. The polypeptide is Adenylosuccinate synthetase (Desulfovibrio desulfuricans (strain ATCC 27774 / DSM 6949 / MB)).